Here is a 243-residue protein sequence, read N- to C-terminus: Phosphoribosylaminoimidazole-succinocarboxamide synthase (243 aa).

It belongs to the SAICAR synthetase family.

It carries out the reaction 5-amino-1-(5-phospho-D-ribosyl)imidazole-4-carboxylate + L-aspartate + ATP = (2S)-2-[5-amino-1-(5-phospho-beta-D-ribosyl)imidazole-4-carboxamido]succinate + ADP + phosphate + 2 H(+). Its pathway is purine metabolism; IMP biosynthesis via de novo pathway; 5-amino-1-(5-phospho-D-ribosyl)imidazole-4-carboxamide from 5-amino-1-(5-phospho-D-ribosyl)imidazole-4-carboxylate: step 1/2. In Methanobrevibacter smithii (strain ATCC 35061 / DSM 861 / OCM 144 / PS), this protein is Phosphoribosylaminoimidazole-succinocarboxamide synthase.